The sequence spans 136 residues: Large ribosomal subunit protein bL20c (136 aa).

The protein belongs to the bacterial ribosomal protein bL20 family.

It is found in the plastid. It localises to the chloroplast. Its function is as follows. Binds directly to 23S ribosomal RNA and is necessary for the in vitro assembly process of the 50S ribosomal subunit. It is not involved in the protein synthesizing functions of that subunit. The polypeptide is Large ribosomal subunit protein bL20c (Huperzia lucidula (Shining clubmoss)).